Consider the following 711-residue polypeptide: Hydroperoxide isomerase ALOXE3 (711 aa).

Positions 2–119 constitute a PLAT domain; the sequence is AVYRLCVTTG…TVELRPGTAR (118 aa). Residues 120-711 enclose the Lipoxygenase domain; that stretch reads TICQDSLPLL…PPLIENSVSI (592 aa). Fe cation-binding residues include His-408, His-413, His-588, Asn-592, and Ile-711.

This sequence belongs to the lipoxygenase family. The cofactor is Fe cation. In terms of tissue distribution, skin specific.

The protein localises to the cytoplasm. It catalyses the reaction a hydroperoxyeicosatetraenoate = a hydroxy-epoxy-eicosatetraenoate. The enzyme catalyses (8S)-hydroperoxy-(5Z,9E,11Z,14Z)-eicosatetraenoate = (10R)-hydroxy-(8S,9S)-epoxy-(5Z,11Z,14Z)-eicosatrienoate. The catalysed reaction is (12R)-hydroperoxy-(5Z,8Z,10E,14Z)-eicosatetraenoate = (8R)-hydroxy-(11R,12R)-epoxy-(5Z,9E,14Z)-eicosatrienoate. It carries out the reaction (12S)-hydroperoxy-(5Z,8Z,10E,14Z)-eicosatetraenoate = (8R)-hydroxy-(11S,12S)-epoxy-(5Z,9E,14Z)-eicosatrienoate. It catalyses the reaction (12S)-hydroperoxy-(5Z,8Z,10E,14Z)-eicosatetraenoate = (10R)-hydroxy-(11S,12S)-epoxy-(5Z,8Z,14Z)-eicosatrienoate. The enzyme catalyses (15S)-hydroperoxy-(5Z,8Z,11Z,13E)-eicosatetraenoate = (13R)-hydroxy-(14S,15S)-epoxy-(5Z,8Z,11Z)-eicosatrienoate. The catalysed reaction is (13S)-hydroperoxy-(9Z,11E)-octadecadienoate = 11-hydroxy-(12S,13S)-epoxy-(9Z)-octadecenoate. It carries out the reaction (5S)-hydroperoxy-(6E,8Z,11Z,14Z)-eicosatetraenoate = 7R-hydroxy-5S,6S-epoxy-(8Z,11Z,14Z)-eicosatrienoate. It catalyses the reaction N-[omega-(9R)-hydroperoxy-(10E,12Z)-octadecadienoyloxy]acyl-beta-D-glucosyl-(1&lt;-&gt;1)-octadecasphing-4E-enine = a N-[omega-(9R,10R)-epoxy-(13R)-hydroxy-(11E)-octadecenoyloxy]acyl-beta-D-glucosyl-(1&lt;-&gt;1)-sphing-4E-enine. The enzyme catalyses a N-[omega-(9R)-hydroperoxy-(10E,12Z)-octadecadienoyloxy]-acylsphin-4E-enine = a N-[omega-(9R,10R)-epoxy-(13R)-hydroxy-(11E)-octadecenoyloxy]-acylsphing-4E-enine. The catalysed reaction is a hydroperoxyeicosatetraenoate = an oxoeicosatetraenoate + H2O. It carries out the reaction (8R)-hydroperoxy-(5Z,9E,11Z,14Z)-eicosatetraenoate = 8-oxo-(5Z,9E,11Z,14Z)-eicosatetraenoate + H2O. It catalyses the reaction (8S)-hydroperoxy-(5Z,9E,11Z,14Z)-eicosatetraenoate = 8-oxo-(5Z,9E,11Z,14Z)-eicosatetraenoate + H2O. The enzyme catalyses (12R)-hydroperoxy-(5Z,8Z,10E,14Z)-eicosatetraenoate = 12-oxo-(5Z,8Z,10E,14Z)-eicosatetraenoate + H2O. The catalysed reaction is (12S)-hydroperoxy-(5Z,8Z,10E,14Z)-eicosatetraenoate = 12-oxo-(5Z,8Z,10E,14Z)-eicosatetraenoate + H2O. It carries out the reaction (15S)-hydroperoxy-(5Z,8Z,11Z,13E)-eicosatetraenoate = 15-oxo-(5Z,8Z,11Z,13E)-eicosatetraenoate + H2O. It catalyses the reaction (13S)-hydroperoxy-(9Z,11E)-octadecadienoate = 13-oxo-(9Z,11E)-octadecadienoate + H2O. Its pathway is lipid metabolism; hydroperoxy eicosatetraenoic acid biosynthesis. It participates in lipid metabolism; sphingolipid metabolism. In terms of biological role, non-heme iron-containing lipoxygenase which is atypical in that it displays a prominent hydroperoxide isomerase activity and a reduced lipoxygenases activity. The hydroperoxide isomerase activity catalyzes the isomerization of hydroperoxides, derived from arachidonic and linoleic acid by ALOX12B, into hepoxilin-type epoxyalcohols and ketones. In presence of oxygen, oxygenates polyunsaturated fatty acids, including arachidonic acid, to produce fatty acid hydroperoxides. In the skin, acts downstream of ALOX12B on the linoleate moiety of esterified omega-hydroxyacyl-sphingosine (EOS) ceramides to produce an epoxy-ketone derivative, a crucial step in the conjugation of omega-hydroxyceramide to membrane proteins. Therefore plays a crucial role in the synthesis of corneocytes lipid envelope and the establishment of the skin barrier to water loss. In parallel, it may have a signaling function in barrier formation through the production of hepoxilins metabolites. Also plays a role in adipocyte differentiation through hepoxilin A3 and hepoxilin B3 production which in turn activate PPARG. Through the production of hepoxilins in the spinal cord, it may regulate inflammatory tactile allodynia. This is Hydroperoxide isomerase ALOXE3 from Mus musculus (Mouse).